A 572-amino-acid polypeptide reads, in one-letter code: E3 ubiquitin-protein ligase ZFP91 (572 aa).

Over residues 1 to 12 the composition is skewed to basic and acidic residues; that stretch reads MPGETEEPRSPE. The interval 1–308 is disordered; sequence MPGETEEPRS…PRLPKRRKKP (308 aa). Positions 61 to 70 are enriched in low complexity; it reads AAAAAAAAAA. A compositionally biased stretch (basic residues) spans 72 to 85; that stretch reads SRRRKAEYPRRRRS. 2 positions are modified to phosphoserine: S86 and S106. A compositionally biased stretch (basic and acidic residues) spans 122–131; sequence LTTDKDPKEE. Over residues 143–162 the composition is skewed to low complexity; the sequence is SITTTRASRSWRSSSRTSIS. The segment covering 209-225 has biased composition (acidic residues); that stretch reads SDEEEEEEEEMLISEEE. 2 stretches are compositionally biased toward basic and acidic residues: residues 226–247 and 254–271; these read IPFK…ETPK and KVKE…VEVE. Residues 272 to 284 show a composition bias toward acidic residues; it reads VKEEENEIREDEE. C2H2-type zinc fingers lie at residues 313–338, 344–368, 374–396, 402–424, and 432–455; these read VRCE…KYQH, YVCP…AKHH, YICE…RMIH, LQCE…MKKH, and FSCN…AKSH. The segment at 340–370 is interaction with MAP3K14/NIK; that stretch reads LKKKYVCPHPSCGRLFRLQKQLLRHAKHHTD.

It belongs to the krueppel C2H2-type zinc-finger protein family. In terms of assembly, interacts with MAP3K14/NIK. As to expression, found in all the examined tissues including brain, heart, kidney, lung, liver, spleen, thymus, skeletal muscle, ovary and testis.

The protein resides in the nucleus. The enzyme catalyses S-ubiquitinyl-[E2 ubiquitin-conjugating enzyme]-L-cysteine + [acceptor protein]-L-lysine = [E2 ubiquitin-conjugating enzyme]-L-cysteine + N(6)-ubiquitinyl-[acceptor protein]-L-lysine.. Its pathway is protein modification; protein ubiquitination. Its function is as follows. Atypical E3 ubiquitin-protein ligase that mediates 'Lys-63'-linked ubiquitination of MAP3K14/NIK, leading to stabilize and activate MAP3K14/NIK. It thereby acts as an activator of the non-canonical NF-kappa-B2/NFKB2 pathway. May also play an important role in cell proliferation and/or anti-apoptosis. The protein is E3 ubiquitin-protein ligase ZFP91 (Zfp91) of Mus musculus (Mouse).